The chain runs to 90 residues: Small ribosomal subunit protein bS16 (90 aa).

The protein belongs to the bacterial ribosomal protein bS16 family.

The protein is Small ribosomal subunit protein bS16 of Lactobacillus gasseri (strain ATCC 33323 / DSM 20243 / BCRC 14619 / CIP 102991 / JCM 1131 / KCTC 3163 / NCIMB 11718 / NCTC 13722 / AM63).